Here is a 283-residue protein sequence, read N- to C-terminus: NAD kinase (283 aa).

Catalysis depends on D66, which acts as the Proton acceptor. Residues 66–67 (DG), 137–138 (ND), R165, D167, and 178–183 (TGYSLS) each bind NAD(+).

It belongs to the NAD kinase family. Requires a divalent metal cation as cofactor.

The protein resides in the cytoplasm. The enzyme catalyses NAD(+) + ATP = ADP + NADP(+) + H(+). Its function is as follows. Involved in the regulation of the intracellular balance of NAD and NADP, and is a key enzyme in the biosynthesis of NADP. Catalyzes specifically the phosphorylation on 2'-hydroxyl of the adenosine moiety of NAD to yield NADP. The sequence is that of NAD kinase from Chloroherpeton thalassium (strain ATCC 35110 / GB-78).